We begin with the raw amino-acid sequence, 1112 residues long: Mediator of RNA polymerase II transcription subunit 14 (1112 aa).

Belongs to the Mediator complex subunit 14 family. Component of the Mediator complex.

It is found in the nucleus. In terms of biological role, component of the Mediator complex, a coactivator involved in the regulated transcription of nearly all RNA polymerase II-dependent genes. Mediator functions as a bridge to convey information from gene-specific regulatory proteins to the basal RNA polymerase II transcription machinery. Mediator is recruited to promoters by direct interactions with regulatory proteins and serves as a scaffold for the assembly of a functional preinitiation complex with RNA polymerase II and the general transcription factors. The sequence is that of Mediator of RNA polymerase II transcription subunit 14 (RGR1) from Scheffersomyces stipitis (strain ATCC 58785 / CBS 6054 / NBRC 10063 / NRRL Y-11545) (Yeast).